The sequence spans 427 residues: UDP-N-acetylglucosamine--N-acetylmuramyl-(pentapeptide) pyrophosphoryl-undecaprenol N-acetylglucosamine transferase (427 aa).

UDP-N-acetyl-alpha-D-glucosamine-binding positions include 29–31 (TGG), Asn141, Arg177, Ser205, Ile258, and Gln303. Residues 408 to 427 (SLHPIPDSRFPIRTSAGGAQ) are disordered.

This sequence belongs to the glycosyltransferase 28 family. MurG subfamily.

It is found in the cell inner membrane. It catalyses the reaction di-trans,octa-cis-undecaprenyl diphospho-N-acetyl-alpha-D-muramoyl-L-alanyl-D-glutamyl-meso-2,6-diaminopimeloyl-D-alanyl-D-alanine + UDP-N-acetyl-alpha-D-glucosamine = di-trans,octa-cis-undecaprenyl diphospho-[N-acetyl-alpha-D-glucosaminyl-(1-&gt;4)]-N-acetyl-alpha-D-muramoyl-L-alanyl-D-glutamyl-meso-2,6-diaminopimeloyl-D-alanyl-D-alanine + UDP + H(+). Its pathway is cell wall biogenesis; peptidoglycan biosynthesis. Cell wall formation. Catalyzes the transfer of a GlcNAc subunit on undecaprenyl-pyrophosphoryl-MurNAc-pentapeptide (lipid intermediate I) to form undecaprenyl-pyrophosphoryl-MurNAc-(pentapeptide)GlcNAc (lipid intermediate II). The protein is UDP-N-acetylglucosamine--N-acetylmuramyl-(pentapeptide) pyrophosphoryl-undecaprenol N-acetylglucosamine transferase of Xanthomonas campestris pv. campestris (strain B100).